The primary structure comprises 245 residues: Protein ARV 1 (245 aa).

5 consecutive transmembrane segments (helical) span residues 70–90, 117–137, 163–183, 200–220, and 224–244; these read INPATVNIQHLLWKLVFAYLL, IKVLIGVLSANAAFIISFAIA, IFLLAMLVWEFPMSVIFFVDI, TMTRCIAVCLIAHLIRFLVGQ, and PTIFLIQIGSLLQYMSYFFRI.

Belongs to the ARV1 family. In terms of tissue distribution, restricted to tissues in which cells are actively dividing or expanding. Mostly expressed in roots and flowers, and, to a lower extent, in stems and leaves.

It is found in the endoplasmic reticulum membrane. In terms of biological role, mediator of sterol homeostasis involved in sterol uptake, trafficking and distribution into membranes. Also regulates the sphingolipid metabolism. The sequence is that of Protein ARV 1 from Arabidopsis thaliana (Mouse-ear cress).